The primary structure comprises 89 residues: Large ribosomal subunit protein bL27 (89 aa).

This sequence belongs to the bacterial ribosomal protein bL27 family.

The sequence is that of Large ribosomal subunit protein bL27 from Bacteroides fragilis (strain ATCC 25285 / DSM 2151 / CCUG 4856 / JCM 11019 / LMG 10263 / NCTC 9343 / Onslow / VPI 2553 / EN-2).